Reading from the N-terminus, the 122-residue chain is Large ribosomal subunit protein uL14 (122 aa).

This sequence belongs to the universal ribosomal protein uL14 family. As to quaternary structure, part of the 50S ribosomal subunit. Forms a cluster with proteins L3 and L19. In the 70S ribosome, L14 and L19 interact and together make contacts with the 16S rRNA in bridges B5 and B8.

Binds to 23S rRNA. Forms part of two intersubunit bridges in the 70S ribosome. The protein is Large ribosomal subunit protein uL14 of Bacillus subtilis (strain 168).